Here is a 554-residue protein sequence, read N- to C-terminus: Transcription factor 7-like 1-A (554 aa).

Residues 1–11 (MPQLNSGGGDE) show a composition bias toward gly residues. An interaction with CTNNB1-A region spans residues 1–61 (MPQLNSGGGD…SENHSSDSDS (61 aa)). Disordered regions lie at residues 1 to 73 (MPQL…REAF), 183 to 213 (GTPP…PYYP), and 391 to 475 (WSAR…LTTK). 2 stretches are compositionally biased toward basic and acidic residues: residues 17-32 (ELIR…EKSP) and 52-73 (SENH…REAF). Residues 109–312 (LGGHYLPNGA…SPNLHTKSNM (204 aa)) are interaction with AES and TLE4-A. The HMG box DNA-binding region spans 324–392 (IKKPLNAFML…LHSQLYPSWS (69 aa)). The span at 407 to 416 (KQSPEMETHT) shows a compositional bias: basic and acidic residues. The interaction with CTBP-B stretch occupies residues 408 to 554 (QSPEMETHTK…PLSLVTKSSD (147 aa)). Residues 445–464 (SPATPSAALASPAAPAATHS) are compositionally biased toward low complexity. A compositionally biased stretch (polar residues) spans 465-474 (EQAQPLSLTT).

It belongs to the TCF/LEF family. As to quaternary structure, interacts with csnk1e, ctnnb1-A, ctbp-B, dact1-A and gsk3b. May interact with ase and tle4-A. In terms of processing, phosphorylated. Phosphorylation by csnk1e promotes binding to ctnnb1-A while phosphorylation by gsk3b may reverse this effect.

The protein resides in the cytoplasm. It is found in the nucleus. In terms of biological role, participates in the Wnt signaling pathway. Binds to DNA and acts as a repressor in the absence of ctnnb1-A and possibly ctnnb1-B, and as an activator in the presence of these proteins. Required early in development for the establishment of the dorsal body axis in response to maternal Wnt signaling. Also required during development of the CNS for the establishment of dorsal-ventral patterning in the prospective diencephalon. In Xenopus laevis (African clawed frog), this protein is Transcription factor 7-like 1-A (tcf7l1-a).